A 1904-amino-acid polypeptide reads, in one-letter code: Callose synthase 10 (1904 aa).

The HAT 1 repeat unit spans residues 100–132 (VIKQKLAKRDGASIDRDRDIERLWEFYKLYKRR). The next 6 helical transmembrane spans lie at 491–511 (SFIR…IIAF), 532–552 (AIMN…AYSM), 562–582 (VIRF…YVKV), 594–614 (FFFH…LIFG), 661–681 (YVAF…FLQI), and 722–742 (VLAI…AIIG). The LRR 1 repeat unit spans residues 678–701 (FLQIKPLVKPTNTIIHLPPFQYSW). 2 LRR repeats span residues 751-774 (LGEI…FAQN) and 925-948 (TLNL…LIRN). One copy of the HAT 2 repeat lies at 1074–1107 (YSSSELRSENEDGISILFYLQKIFPDEWENFLER). Residues 1159 to 1181 (FLERRGLGVDDASLTNMPRGFES) form an LRR 4 repeat. 9 helical membrane-spanning segments follow: residues 1474–1494 (FTTV…YVFL), 1529–1549 (FLVQ…ILEL), 1554–1574 (AIFS…TFSL), 1621–1641 (AFEV…DGGA), 1644–1664 (FVLL…APYI), 1747–1767 (LALY…FKLF), 1783–1803 (FLQG…IAMT), 1811–1831 (FACV…AITW), and 1853–1873 (AAMG…PFIS). An HAT 3 repeat occupies 1659–1691 (LFAPYIFNPSGFEWQKTVEDFEDWVSWLMYKGG).

This sequence belongs to the glycosyltransferase 48 family.

The protein resides in the cell membrane. It catalyses the reaction [(1-&gt;3)-beta-D-glucosyl](n) + UDP-alpha-D-glucose = [(1-&gt;3)-beta-D-glucosyl](n+1) + UDP + H(+). Its function is as follows. Involved in sporophytic and gametophytic development. Required for normal plant development and for the proper accumulation of callose at cell plates, cll walls and plasmodesmata. During pollen formation, required for the entry of microspores into mitosis. During plant growth and development, callose is found as a transitory component of the cell plate in dividing cells, is a major component of pollen mother cell walls and pollen tubes, and is found as a structural component of plasmodesmatal canals. Required for proper cell division and tissue patterning throughout plant organs, including stomatal patterning. The protein is Callose synthase 10 (CALS10) of Arabidopsis thaliana (Mouse-ear cress).